Reading from the N-terminus, the 422-residue chain is Phospho-N-acetylmuramoyl-pentapeptide-transferase (422 aa).

9 helical membrane-spanning segments follow: residues 28–48 (LMAV…FINL), 71–91 (VGVP…PCLL), 95–115 (LDNI…SLGF), 136–156 (IIGQ…SPDV), 211–231 (AGWF…SNGA), 239–259 (GMAA…AYVS), 279–299 (LVIY…YNAY), 313–333 (IGGI…IPIL), and 399–419 (KITV…IITL).

It belongs to the glycosyltransferase 4 family. MraY subfamily. Mg(2+) is required as a cofactor.

The protein resides in the cell inner membrane. The catalysed reaction is UDP-N-acetyl-alpha-D-muramoyl-L-alanyl-gamma-D-glutamyl-meso-2,6-diaminopimeloyl-D-alanyl-D-alanine + di-trans,octa-cis-undecaprenyl phosphate = di-trans,octa-cis-undecaprenyl diphospho-N-acetyl-alpha-D-muramoyl-L-alanyl-D-glutamyl-meso-2,6-diaminopimeloyl-D-alanyl-D-alanine + UMP. Its pathway is cell wall biogenesis; peptidoglycan biosynthesis. Catalyzes the initial step of the lipid cycle reactions in the biosynthesis of the cell wall peptidoglycan: transfers peptidoglycan precursor phospho-MurNAc-pentapeptide from UDP-MurNAc-pentapeptide onto the lipid carrier undecaprenyl phosphate, yielding undecaprenyl-pyrophosphoryl-MurNAc-pentapeptide, known as lipid I. The sequence is that of Phospho-N-acetylmuramoyl-pentapeptide-transferase from Bacteroides thetaiotaomicron (strain ATCC 29148 / DSM 2079 / JCM 5827 / CCUG 10774 / NCTC 10582 / VPI-5482 / E50).